A 904-amino-acid chain; its full sequence is Protein translocase subunit SecA (904 aa).

Residues Gln89, Gly107–Thr111, and Asp502 each bind ATP. Positions Val872–Ser892 are disordered. Residues Cys888, Cys890, Cys899, and His900 each contribute to the Zn(2+) site.

This sequence belongs to the SecA family. In terms of assembly, part of the essential protein translocation apparatus which comprises SecA, SecYEG and auxiliary proteins SecDF-YajC and YidC. Homodimer. Zn(2+) is required as a cofactor.

Its subcellular location is the cell inner membrane. It is found in the cytoplasm. The catalysed reaction is ATP + H2O + cellular proteinSide 1 = ADP + phosphate + cellular proteinSide 2.. Functionally, part of the Sec protein translocase complex. Interacts with the SecYEG preprotein conducting channel. Has a central role in coupling the hydrolysis of ATP to the transfer of proteins into and across the cell membrane, serving both as a receptor for the preprotein-SecB complex and as an ATP-driven molecular motor driving the stepwise translocation of polypeptide chains across the membrane. The protein is Protein translocase subunit SecA of Rhodobacter capsulatus (Rhodopseudomonas capsulata).